The chain runs to 104 residues: uncharacterized protein (104 aa).

As to quaternary structure, homodimer.

This is an uncharacterized protein from Bacillus subtilis (strain 168).